We begin with the raw amino-acid sequence, 52 residues long: UPF0057 membrane protein PA0567 (52 aa).

The next 2 membrane-spanning stretches (helical) occupy residues 6–26 (ILIA…FGGA) and 29–49 (LNIL…VYII).

The protein belongs to the UPF0057 (PMP3) family.

It localises to the cell membrane. This Pseudomonas aeruginosa (strain ATCC 15692 / DSM 22644 / CIP 104116 / JCM 14847 / LMG 12228 / 1C / PRS 101 / PAO1) protein is UPF0057 membrane protein PA0567.